Here is a 529-residue protein sequence, read N- to C-terminus: GMP synthase [glutamine-hydrolyzing] (529 aa).

Residues 17-206 (TILVLDFGSQ…AIDICQASNN (190 aa)) form the Glutamine amidotransferase type-1 domain. Residue C93 is the Nucleophile of the active site. Residues H180 and E182 contribute to the active site. One can recognise a GMPS ATP-PPase domain in the interval 207-404 (WTMENFIDTE…MGVPHDLVWR (198 aa)). 235–241 (SGGVDST) is an ATP binding site. R308, D466, K521, and E527 together coordinate XMP.

Homodimer. The cofactor is Mg(2+).

Its subcellular location is the cytoplasm. It is found in the cytosol. The enzyme catalyses XMP + L-glutamine + ATP + H2O = GMP + L-glutamate + AMP + diphosphate + 2 H(+). Its pathway is purine metabolism; GMP biosynthesis; GMP from XMP (L-Gln route): step 1/1. Catalyzes the conversion of xanthine monophosphate (XMP) to GMP in the presence of glutamine and ATP through an adenyl-XMP intermediate. The polypeptide is GMP synthase [glutamine-hydrolyzing] (GUA1) (Debaryomyces hansenii (strain ATCC 36239 / CBS 767 / BCRC 21394 / JCM 1990 / NBRC 0083 / IGC 2968) (Yeast)).